We begin with the raw amino-acid sequence, 447 residues long: Adenylosuccinate synthetase (447 aa).

GTP-binding positions include 35 to 41 and 63 to 65; these read GDEGKGK and GHT. The active-site Proton acceptor is the aspartate 36. Residues aspartate 36 and glycine 63 each coordinate Mg(2+). Residues 36 to 39, 61 to 64, threonine 153, arginine 167, asparagine 245, threonine 260, and arginine 324 each bind IMP; these read DEGK and NAGH. Histidine 64 (proton donor) is an active-site residue. 320–326 is a binding site for substrate; it reads VTTKRKR. GTP contacts are provided by residues arginine 326, 352–354, and 435–437; these read KLD and GVG.

This sequence belongs to the adenylosuccinate synthetase family. In terms of assembly, homodimer. Requires Mg(2+) as cofactor.

The protein resides in the cytoplasm. It carries out the reaction IMP + L-aspartate + GTP = N(6)-(1,2-dicarboxyethyl)-AMP + GDP + phosphate + 2 H(+). Its pathway is purine metabolism; AMP biosynthesis via de novo pathway; AMP from IMP: step 1/2. Plays an important role in the de novo pathway and in the salvage pathway of purine nucleotide biosynthesis. Catalyzes the first committed step in the biosynthesis of AMP from IMP. This is Adenylosuccinate synthetase from Drosophila erecta (Fruit fly).